A 294-amino-acid polypeptide reads, in one-letter code: Cell division control protein 2 homolog A (294 aa).

Positions 4-287 constitute a Protein kinase domain; that stretch reads YEKVEKIGEG…ARNALQHEYF (284 aa). Residues 10-18 and Lys-33 each bind ATP; that span reads IGEGTYGVV. A Phosphothreonine modification is found at Thr-14. A Phosphotyrosine modification is found at Tyr-15. Residue Asp-127 is the Proton acceptor of the active site. The residue at position 161 (Thr-161) is a Phosphothreonine; by CAK.

It belongs to the protein kinase superfamily. CMGC Ser/Thr protein kinase family. CDC2/CDKX subfamily.

The catalysed reaction is L-seryl-[protein] + ATP = O-phospho-L-seryl-[protein] + ADP + H(+). It carries out the reaction L-threonyl-[protein] + ATP = O-phospho-L-threonyl-[protein] + ADP + H(+). It catalyses the reaction [DNA-directed RNA polymerase] + ATP = phospho-[DNA-directed RNA polymerase] + ADP + H(+). Its activity is regulated as follows. Phosphorylation at Thr-14 or Tyr-15 inactivates the enzyme, while phosphorylation at Thr-161 activates it. Plays a key role in the control of the eukaryotic cell cycle. The chain is Cell division control protein 2 homolog A (CDC2A) from Antirrhinum majus (Garden snapdragon).